The primary structure comprises 319 residues: Ribose-phosphate pyrophosphokinase (319 aa).

Residues 41–43 (DGE) and 100–101 (RQ) contribute to the ATP site. Mg(2+) is bound by residues His134 and Asp176. The active site involves Lys199. D-ribose 5-phosphate-binding positions include Arg201, Asp225, and 229–233 (DTAGT).

The protein belongs to the ribose-phosphate pyrophosphokinase family. Class I subfamily. As to quaternary structure, homohexamer. Requires Mg(2+) as cofactor.

The protein localises to the cytoplasm. The catalysed reaction is D-ribose 5-phosphate + ATP = 5-phospho-alpha-D-ribose 1-diphosphate + AMP + H(+). The protein operates within metabolic intermediate biosynthesis; 5-phospho-alpha-D-ribose 1-diphosphate biosynthesis; 5-phospho-alpha-D-ribose 1-diphosphate from D-ribose 5-phosphate (route I): step 1/1. Its function is as follows. Involved in the biosynthesis of the central metabolite phospho-alpha-D-ribosyl-1-pyrophosphate (PRPP) via the transfer of pyrophosphoryl group from ATP to 1-hydroxyl of ribose-5-phosphate (Rib-5-P). In Clostridium perfringens (strain 13 / Type A), this protein is Ribose-phosphate pyrophosphokinase.